Here is a 202-residue protein sequence, read N- to C-terminus: Nucleoside triphosphate pyrophosphatase (202 aa).

Residue Asp-79 is the Proton acceptor of the active site.

It belongs to the Maf family. The cofactor is a divalent metal cation.

It localises to the cytoplasm. The enzyme catalyses a ribonucleoside 5'-triphosphate + H2O = a ribonucleoside 5'-phosphate + diphosphate + H(+). It catalyses the reaction a 2'-deoxyribonucleoside 5'-triphosphate + H2O = a 2'-deoxyribonucleoside 5'-phosphate + diphosphate + H(+). Its function is as follows. Nucleoside triphosphate pyrophosphatase. May have a dual role in cell division arrest and in preventing the incorporation of modified nucleotides into cellular nucleic acids. This Rhodopseudomonas palustris (strain ATCC BAA-98 / CGA009) protein is Nucleoside triphosphate pyrophosphatase.